The primary structure comprises 226 residues: MVKYLSQSEAIELDLDLFEMFHVGQLMELAGLSCADAVAECFPAQTHPRVLVVCGPGNNGGDGLVCARHLSLMGYQPTVYYPKPTLMSLYENLTNQCHHMEIPSVKKCPSVSDAEEDYDLILDALFGFGFKPPVREDFVPLVKMMQETKVPIASVDIPSGWDVEKGKQSECDFEPKLLISLTAPKLCAEHFKGEHHYLGGRFVPPALQRKYQLNLPDYGSKLVVRL.

Positions 10-215 (AIELDLDLFE…ALQRKYQLNL (206 aa)) constitute a YjeF N-terminal domain. 58–62 (NNGGD) provides a ligand contact to (6S)-NADPHX. K(+) is bound by residues Asn-59 and Asp-123. (6S)-NADPHX contacts are provided by residues 127–133 (GFGFKPP) and Asp-156. Ser-159 provides a ligand contact to K(+).

The protein belongs to the NnrE/AIBP family. K(+) serves as cofactor.

It catalyses the reaction (6R)-NADHX = (6S)-NADHX. The enzyme catalyses (6R)-NADPHX = (6S)-NADPHX. In terms of biological role, catalyzes the epimerization of the S- and R-forms of NAD(P)HX, a damaged form of NAD(P)H that is a result of enzymatic or heat-dependent hydration. This is a prerequisite for the S-specific NAD(P)H-hydrate dehydratase to allow the repair of both epimers of NAD(P)HX. In Drosophila pseudoobscura pseudoobscura (Fruit fly), this protein is NAD(P)H-hydrate epimerase.